The chain runs to 453 residues: HTH-type pyridoxine biosynthesis transcriptional regulator PdxR (453 aa).

Residues 15 to 83 (TSIPTQLTEQ…RGSGTTINPD (69 aa)) form the HTH gntR-type domain. The segment at residues 43 to 62 (SRSLSTQLGVSRGSVVTAYD) is a DNA-binding region (H-T-H motif).

This sequence in the C-terminal section; belongs to the class-I pyridoxal-phosphate-dependent aminotransferase family. The cofactor is pyridoxal 5'-phosphate.

May have a regulatory function in pyridoxine biosynthesis. Is said to also have an aminotransferase activity in valine biosynthesis as a double inactivation of ilvE and pdxR results in an auxotrophic requirement for valine. This Corynebacterium glutamicum (strain ATCC 13032 / DSM 20300 / JCM 1318 / BCRC 11384 / CCUG 27702 / LMG 3730 / NBRC 12168 / NCIMB 10025 / NRRL B-2784 / 534) protein is HTH-type pyridoxine biosynthesis transcriptional regulator PdxR (pdxR).